A 280-amino-acid polypeptide reads, in one-letter code: Aspartate/glutamate leucyltransferase (280 aa).

Belongs to the R-transferase family. Bpt subfamily.

It localises to the cytoplasm. It catalyses the reaction N-terminal L-glutamyl-[protein] + L-leucyl-tRNA(Leu) = N-terminal L-leucyl-L-glutamyl-[protein] + tRNA(Leu) + H(+). It carries out the reaction N-terminal L-aspartyl-[protein] + L-leucyl-tRNA(Leu) = N-terminal L-leucyl-L-aspartyl-[protein] + tRNA(Leu) + H(+). Functionally, functions in the N-end rule pathway of protein degradation where it conjugates Leu from its aminoacyl-tRNA to the N-termini of proteins containing an N-terminal aspartate or glutamate. The chain is Aspartate/glutamate leucyltransferase from Cereibacter sphaeroides (strain KD131 / KCTC 12085) (Rhodobacter sphaeroides).